The sequence spans 585 residues: Probable G-protein coupled receptor Mth-like 10 (585 aa).

The N-terminal stretch at 1–32 (MPKKIHQPGGSLYCGVTLLGVLCLVVFRLIPG) is a signal peptide. At 33-250 (IPFGTYVMAE…DHSTVKIINS (218 aa)) the chain is on the extracellular side. 5 cysteine pairs are disulfide-bonded: cysteine 56/cysteine 110, cysteine 112/cysteine 117, cysteine 121/cysteine 216, cysteine 122/cysteine 135, and cysteine 177/cysteine 236. Residues asparagine 63 and asparagine 72 are each glycosylated (N-linked (GlcNAc...) asparagine). 5 N-linked (GlcNAc...) asparagine glycosylation sites follow: asparagine 142, asparagine 152, asparagine 157, asparagine 198, and asparagine 223. A helical transmembrane segment spans residues 251 to 271 (YAMMFSIPFMMLTIAVYLLIP). The Cytoplasmic segment spans residues 272 to 280 (ELRNQHGKS). A helical membrane pass occupies residues 281–301 (LVCYLIGLSVGYSSLCYVQLY). Residues 302-312 (QVDATGVTCKV) are Extracellular-facing. Residues 313 to 333 (FGYTAYFFFMGAYMWLSVISF) traverse the membrane as a helical segment. Topologically, residues 334–353 (DLWHNFRGTRGINRFQEKKR) are cytoplasmic. The helical transmembrane segment at 354-374 (FLFYSLYSWGIALVFLAFTYC) threads the bilayer. At 375-404 (AQQLTNLPANLKPGIGDGVYCWLDMSNWAA) the chain is on the extracellular side. The helical transmembrane segment at 405 to 425 (MIYFYGPILAIVVANTIMFIM) threads the bilayer. Residues 426–466 (TAIKIHGVQREMARIIASENSTKNLRTEKDKRFYRAWSNYR) lie on the Cytoplasmic side of the membrane. A helical transmembrane segment spans residues 467-487 (FGLFLRLFLIMGITWLTELIS). Residues 488 to 498 (YFVGSDKGWSK) lie on the Extracellular side of the membrane. The helical transmembrane segment at 499 to 519 (LFYISDLANAMQGFLIFMLFV) threads the bilayer. Over 520-585 (MKKKVKHLIT…VDPQKTTIFR (66 aa)) the chain is Cytoplasmic.

It belongs to the G-protein coupled receptor 2 family. Mth subfamily.

The protein resides in the cell membrane. This chain is Probable G-protein coupled receptor Mth-like 10 (mthl10), found in Drosophila melanogaster (Fruit fly).